A 310-amino-acid chain; its full sequence is MKLVFAGTPEVAVPALDALIASGRHEVAAVVTRPDAPAGRGRRLVASPVAERAEEAGIEVLKPAKPRDPDFLERLREIAPDCCPVVAYGALLPRVALDVPARGWVNLHFSLLPAWRGAAPVQHALMAGDEITGASTFLIEEGLDSGPVYGTVTETVRPTDTSGDLLTRLAFAGAGLLAATMDGIEDGSLEAVPQPAEGVTLAPKITVEDARVDWTAPALRVDRVVRGCTPAPGAWTTFRGERLKLVQAVPLPDRSDLAPGQLAAGKNNVYVGTGSHAVELLWVQAQGKKPMRAADWARGARITEGERVGD.

(6S)-5,6,7,8-tetrahydrofolate is bound at residue 110 to 113 (SLLP).

Belongs to the Fmt family.

The enzyme catalyses L-methionyl-tRNA(fMet) + (6R)-10-formyltetrahydrofolate = N-formyl-L-methionyl-tRNA(fMet) + (6S)-5,6,7,8-tetrahydrofolate + H(+). Attaches a formyl group to the free amino group of methionyl-tRNA(fMet). The formyl group appears to play a dual role in the initiator identity of N-formylmethionyl-tRNA by promoting its recognition by IF2 and preventing the misappropriation of this tRNA by the elongation apparatus. This Streptomyces coelicolor (strain ATCC BAA-471 / A3(2) / M145) protein is Methionyl-tRNA formyltransferase.